The following is a 282-amino-acid chain: Bis(5'-nucleosyl)-tetraphosphatase, symmetrical (282 aa).

It belongs to the Ap4A hydrolase family.

The catalysed reaction is P(1),P(4)-bis(5'-adenosyl) tetraphosphate + H2O = 2 ADP + 2 H(+). Hydrolyzes diadenosine 5',5'''-P1,P4-tetraphosphate to yield ADP. The protein is Bis(5'-nucleosyl)-tetraphosphatase, symmetrical of Shigella dysenteriae serotype 1 (strain Sd197).